The sequence spans 100 residues: Putative pterin-4-alpha-carbinolamine dehydratase (100 aa).

It belongs to the pterin-4-alpha-carbinolamine dehydratase family.

It carries out the reaction (4aS,6R)-4a-hydroxy-L-erythro-5,6,7,8-tetrahydrobiopterin = (6R)-L-erythro-6,7-dihydrobiopterin + H2O. This Bradyrhizobium diazoefficiens (strain JCM 10833 / BCRC 13528 / IAM 13628 / NBRC 14792 / USDA 110) protein is Putative pterin-4-alpha-carbinolamine dehydratase.